We begin with the raw amino-acid sequence, 434 residues long: Oxysterol-binding protein homolog 4 (434 aa).

The interval 7-29 (SSSWTSFLKSIASFNGDLSSLSA) is ALPS motif. The tract at residues 16–366 (SIASFNGDLS…WQRRWFKDFD (351 aa)) is OSBP-related domain (ORD). A 1,2-diacyl-sn-glycero-3-phospho-(1D-myo-inositol 4-phosphate) is bound at residue 24–29 (LSSLSA). 20-hydroxycholesterol is bound at residue glutamine 96. Residue glutamine 96 participates in 25-hydroxycholesterol binding. 7beta-hydroxycholesterol-binding residues include glutamine 96 and arginine 100. Glutamine 96 is a binding site for cholesterol. Glutamine 96 contacts ergosterol. Residues 109 to 112 (KPLN), 143 to 144 (HH), lysine 336, glutamate 340, and arginine 344 contribute to the a 1,2-diacyl-sn-glycero-3-phospho-(1D-myo-inositol 4-phosphate) site. Threonine 370 bears the Phosphothreonine mark. Serine 389 carries the phosphoserine modification.

It belongs to the OSBP family.

It localises to the cytoplasm. The protein localises to the golgi apparatus membrane. Lipid transport protein (LTP) involved in non-vesicular transfer of lipids between membranes. Functions in phosphoinositide-coupled directional transport of various lipids by carrying the lipid molecule in a hydrophobic pocket and transferring it between membranes through the cytosol. Involved in maintenance of intracellular sterol distribution and homeostasis. Involved in lipid countertransport between the Golgi complex and membranes of the endoplasmic reticulum. Specifically exchanges sterol with phosphatidylinositol 4-phosphate (PI4P), delivering sterol to the Golgi in exchange for PI4P, which is delivered to the ER-localized PI4P phosphatase SAC1 for degradation. Thus, by maintaining a PI4P gradient at the ER/Golgi interface, SAC1 may drive PS transport. Displays a similar affinity for PI4P and sterols. Binds sterol and PI4P in a mutually exclusive manner. Involved in ergosterol transport from the plasma membrane (PM) to the ER. Mediates sterol transport from the ER to mitochondria. Involved in the negative regulation of Golgi-derived transport vesicle biogenesis. Plays a role in the positive regulation of vesicular transport of ceramide from the ER to the Golgi, negatively regulating COPII-mediated ER export of cargos. The polypeptide is Oxysterol-binding protein homolog 4 (Saccharomyces cerevisiae (strain ATCC 204508 / S288c) (Baker's yeast)).